The primary structure comprises 433 residues: Histidinol dehydrogenase (433 aa).

Positions 130, 191, and 214 each coordinate NAD(+). Substrate-binding residues include Ser237, Gln259, and His262. Residues Gln259 and His262 each coordinate Zn(2+). Catalysis depends on proton acceptor residues Glu327 and His328. Substrate-binding residues include His328, Asp361, Glu415, and His420. Asp361 contacts Zn(2+). His420 lines the Zn(2+) pocket.

It belongs to the histidinol dehydrogenase family. Requires Zn(2+) as cofactor.

The catalysed reaction is L-histidinol + 2 NAD(+) + H2O = L-histidine + 2 NADH + 3 H(+). The protein operates within amino-acid biosynthesis; L-histidine biosynthesis; L-histidine from 5-phospho-alpha-D-ribose 1-diphosphate: step 9/9. Functionally, catalyzes the sequential NAD-dependent oxidations of L-histidinol to L-histidinaldehyde and then to L-histidine. The polypeptide is Histidinol dehydrogenase (Ruegeria pomeroyi (strain ATCC 700808 / DSM 15171 / DSS-3) (Silicibacter pomeroyi)).